The sequence spans 557 residues: MTDGPLIVQSDKTLLLEVDHPRAGACRAAIAPFAELERAPEHVHTYRLTPLGLWNARAAGHDAEQVVDTLLEFSRYSVPHALLVDVAETMARYGRLQLVKDEEHGLVLRSLDPAVLEEVLRSRKSAPLLGTRIAPDAVLVHPSERGNLKQVLLKLGWPAEDLAGYVDGEAHAIDLAEDGWALRPYQSEAVDNFWNGGSGVVVLPCGAGKTLVGAAAMAKARATTLILVTNTVSARQWRDELLKRTSLTEDEIGEYSGARKEIRPVTIATYQVVTTKRKGVYPHLELFDARDWGLILYDEVHLLPAPIFRMTADLQARRRLGLTATLVREDGREGDVFSLIGPKRYDAPWKDIEAQGYIAPADCVEVRVTLPDAERLAYATAEDDEKYRLCSTSLSKSRVVEKLVAQHAGEPTLVIGQYIDQLDDLAARLDAPVIKGETTVKERQRLFDAFRHGEITTLVVSKVANFSIDLPEAKVAIQVSGSFGSRQEEAQRLGRVLRPKGDHGSARFYTVVSRDTKDQDYAAHRQRFLAEQGYAYRIVDADDIDGGVPDADGVLPG.

Residues 1-135 (MTDGPLIVQS…APLLGTRIAP (135 aa)) are required for protein stability or solubility. The region spanning 190–344 (VDNFWNGGSG…DVFSLIGPKR (155 aa)) is the Helicase ATP-binding domain. 203–210 (LPCGAGKT) is a binding site for ATP. The DEAH box motif lies at 298–301 (DEVH). Positions 398 to 544 (RVVEKLVAQH…AYRIVDADDI (147 aa)) constitute a Helicase C-terminal domain.

This sequence belongs to the helicase family. RAD25/XPB subfamily. As to quaternary structure, monomer. Mn(2+) serves as cofactor. The cofactor is Mg(2+). It depends on Ca(2+) as a cofactor.

The catalysed reaction is Couples ATP hydrolysis with the unwinding of duplex DNA by translocating in the 3'-5' direction.. It carries out the reaction ATP + H2O = ADP + phosphate + H(+). Functionally, ATP-dependent 3'-5' DNA helicase, unwinds 3'-overhangs, 3'- flaps, and splayed-arm DNA substrates but not 5'-overhangs or 5'-flap substrates. Requires ATP hydrolysis for activity; the ATPase activity is DNA-dependent and requires a minimum of 4 single-stranded nucleotides (nt) with 6-10 nt providing all necessary interactions for full processive unwinding. The ATPase prefers ATP over CTP or GTP, is almost inactive with TTP. The protein is DNA 3'-5' helicase XPB of Kineococcus radiotolerans (strain ATCC BAA-149 / DSM 14245 / SRS30216).